Here is a 393-residue protein sequence, read N- to C-terminus: Ribonuclease D (393 aa).

The 3'-5' exonuclease domain maps to 14 to 181 (LITTTEDLTG…VYQLLLERLE (168 aa)). One can recognise an HRDC domain in the interval 219 to 300 (NRRMLGVLRA…AAARALPDGA (82 aa)).

The protein belongs to the RNase D family. Requires a divalent metal cation as cofactor.

The protein resides in the cytoplasm. It carries out the reaction Exonucleolytic cleavage that removes extra residues from the 3'-terminus of tRNA to produce 5'-mononucleotides.. Functionally, exonuclease involved in the 3' processing of various precursor tRNAs. Initiates hydrolysis at the 3'-terminus of an RNA molecule and releases 5'-mononucleotides. In Gluconacetobacter diazotrophicus (strain ATCC 49037 / DSM 5601 / CCUG 37298 / CIP 103539 / LMG 7603 / PAl5), this protein is Ribonuclease D.